A 198-amino-acid polypeptide reads, in one-letter code: Alpha1-proteinase inhibitor-degradation deficient protein 37 (198 aa).

At serine 79 the chain carries Phosphoserine.

Its subcellular location is the cytoplasm. In terms of biological role, involved in ER-associated protein degradation (ERAD). The chain is Alpha1-proteinase inhibitor-degradation deficient protein 37 (ADD37) from Saccharomyces cerevisiae (strain ATCC 204508 / S288c) (Baker's yeast).